A 404-amino-acid chain; its full sequence is Odorant receptor 74a (404 aa).

The Cytoplasmic segment spans residues 1–38; that stretch reads MSFHRYRPRLPGGELAPMPWPVSLYRVLNHVAWPLEAE. Residues 39–59 traverse the membrane as a helical segment; sequence SGRWTVFLDRLMIFLGFLVFC. Residues 60-67 are Extracellular-facing; the sequence is EHNEVDFH. The chain crosses the membrane as a helical span at residues 68 to 88; the sequence is YLIANRQDMDNMLTGLPTYLI. Residues 89–141 are Cytoplasmic-facing; it reads LVEMQIRCFQLAWHKDRFRALLQRFYAEIYVSEEMEPHLFASIQRQMLATRVN. Residues 142–162 form a helical membrane-spanning segment; that stretch reads STVYLLALLNFFLVPVTNVIY. The Extracellular portion of the chain corresponds to 163–181; that stretch reads HRREMLYKQVYPFDNTQLH. Residues 182–202 form a helical membrane-spanning segment; sequence FFIPLLVLNFWVGFIITSMLF. Residues 203-274 lie on the Cytoplasmic side of the membrane; it reads GELNVMGELM…QRVEKEFTLR (72 aa). Residues 275–295 form a helical membrane-spanning segment; it reads IFVMFAFSAGLLCALFFKAFT. Residues 296-303 are Extracellular-facing; that stretch reads NPWGNVAY. The helical transmembrane segment at 304 to 324 threads the bilayer; the sequence is IVWFLAKFMELLALGMLGSIL. At 325-380 the chain is on the cytoplasmic side; it reads LKTTDELGMMYYTADWEQVIHQSDNVGENVKLMKLVTLAIQLNSRPFFITGLNYFR. The helical transmembrane segment at 381–401 threads the bilayer; sequence VSLTAVLKIIQGAFSYFTFLN. Topologically, residues 402 to 404 are extracellular; sequence SMR.

The protein belongs to the insect chemoreceptor superfamily. Heteromeric odorant receptor channel (TC 1.A.69) family. Or1a subfamily. In terms of assembly, interacts with Orco. Complexes exist early in the endomembrane system in olfactory sensory neurons (OSNs), coupling these complexes to the conserved ciliary trafficking pathway.

Its subcellular location is the cell membrane. In terms of biological role, odorant receptor which mediates acceptance or avoidance behavior, depending on its substrates. The odorant receptor repertoire encodes a large collection of odor stimuli that vary widely in identity, intensity, and duration. May form a complex with Orco to form odorant-sensing units, providing sensitive and prolonged odorant signaling and calcium permeability. Involved in the behavioral responses to octanol, anisole, and 2-heptanone. The polypeptide is Odorant receptor 74a (Or74a) (Drosophila melanogaster (Fruit fly)).